A 22-amino-acid polypeptide reads, in one-letter code: ESQKVQGDVIGVDLGTTYSCVA.

The protein belongs to the heat shock protein 70 family.

Its subcellular location is the mitochondrion. This chain is Heat shock 70-related protein 1, mitochondrial, found in Leishmania tarentolae (Sauroleishmania tarentolae).